A 401-amino-acid polypeptide reads, in one-letter code: Chorismate synthase (401 aa).

Arg40 and Arg46 together coordinate NADP(+). FMN-binding positions include 135 to 137 (RAS), 256 to 257 (QA), Gly302, 317 to 321 (KPISS), and Arg343.

It belongs to the chorismate synthase family. In terms of assembly, homotetramer. Requires FMNH2 as cofactor.

It catalyses the reaction 5-O-(1-carboxyvinyl)-3-phosphoshikimate = chorismate + phosphate. The protein operates within metabolic intermediate biosynthesis; chorismate biosynthesis; chorismate from D-erythrose 4-phosphate and phosphoenolpyruvate: step 7/7. In terms of biological role, catalyzes the anti-1,4-elimination of the C-3 phosphate and the C-6 proR hydrogen from 5-enolpyruvylshikimate-3-phosphate (EPSP) to yield chorismate, which is the branch point compound that serves as the starting substrate for the three terminal pathways of aromatic amino acid biosynthesis. This reaction introduces a second double bond into the aromatic ring system. The protein is Chorismate synthase of Saccharopolyspora erythraea (strain ATCC 11635 / DSM 40517 / JCM 4748 / NBRC 13426 / NCIMB 8594 / NRRL 2338).